Reading from the N-terminus, the 170-residue chain is MMGDNEGRRTPLLNLGVQVSMRVLIIGAAMASMWVMITNREVASVYGIAFEAKYSYSSAFRYLVYAQIAVCAATLFTLVWACLAVRRRGLVFALFFFDLLTTLTAISAFSAAFAEGYVGKYGNKQAGWLPICGYVHVYCSRVTISLAMSFASFVLLFILTVLTASSARHY.

Residues 1-16 are Cytoplasmic-facing; sequence MMGDNEGRRTPLLNLG. A helical transmembrane segment spans residues 17 to 37; sequence VQVSMRVLIIGAAMASMWVMI. Topologically, residues 38-62 are extracellular; the sequence is TNREVASVYGIAFEAKYSYSSAFRY. The chain crosses the membrane as a helical span at residues 63–83; it reads LVYAQIAVCAATLFTLVWACL. Topologically, residues 84–88 are cytoplasmic; that stretch reads AVRRR. The chain crosses the membrane as a helical span at residues 89 to 109; sequence GLVFALFFFDLLTTLTAISAF. Residues 110–141 lie on the Extracellular side of the membrane; sequence SAAFAEGYVGKYGNKQAGWLPICGYVHVYCSR. A helical membrane pass occupies residues 142 to 162; sequence VTISLAMSFASFVLLFILTVL. Residues 163–170 lie on the Cytoplasmic side of the membrane; it reads TASSARHY.

The protein belongs to the Casparian strip membrane proteins (CASP) family. As to quaternary structure, homodimer and heterodimers.

The protein resides in the cell membrane. This is CASP-like protein 1F1 from Arabidopsis lyrata subsp. lyrata (Lyre-leaved rock-cress).